The primary structure comprises 545 residues: Membrane protein insertase YidC (545 aa).

The chain crosses the membrane as a helical span at residues 6-26 (NLLLIALLFVSFMIWQAWQTD). The segment at 31–54 (PVAQTTQQTSNPATGDAASSAVPA) is disordered. The next 4 helical transmembrane spans lie at 342–362 (KFIH…TFIV), 417–437 (LGGC…YYML), 455–475 (LSAQ…MFFI), and 496–516 (PVIF…YYIV).

Belongs to the OXA1/ALB3/YidC family. Type 1 subfamily. Interacts with the Sec translocase complex via SecD. Specifically interacts with transmembrane segments of nascent integral membrane proteins during membrane integration.

The protein localises to the cell inner membrane. Its function is as follows. Required for the insertion and/or proper folding and/or complex formation of integral membrane proteins into the membrane. Involved in integration of membrane proteins that insert both dependently and independently of the Sec translocase complex, as well as at least some lipoproteins. Aids folding of multispanning membrane proteins. This Serratia proteamaculans (strain 568) protein is Membrane protein insertase YidC.